Reading from the N-terminus, the 35-residue chain is Sperm-specific protein Phi-1 (35 aa).

2 stretches are compositionally biased toward basic residues: residues 1–17 (PSPT…RSRS) and 25–35 (AAKRAKSKTAK). The disordered stretch occupies residues 1-35 (PSPTRRSKSRSKSRSRSRSASAGKAAKRAKSKTAK).

As to expression, sperm.

It localises to the nucleus. The protein localises to the chromosome. In terms of biological role, involved in nuclear basic protein transition: histones are replaced by spermatid specific proteins which are themselves replaced by protamines in late spermatids. This chain is Sperm-specific protein Phi-1, found in Mytilus californianus (California mussel).